The following is a 380-amino-acid chain: UDP-N-acetylglucosamine--N-acetylmuramyl-(pentapeptide) pyrophosphoryl-undecaprenol N-acetylglucosamine transferase (380 aa).

UDP-N-acetyl-alpha-D-glucosamine is bound by residues Thr-23–Gly-25, Asn-137, Arg-178, Ser-210, Ile-266, and Gln-311.

Belongs to the glycosyltransferase 28 family. MurG subfamily.

The protein localises to the cell inner membrane. It catalyses the reaction di-trans,octa-cis-undecaprenyl diphospho-N-acetyl-alpha-D-muramoyl-L-alanyl-D-glutamyl-meso-2,6-diaminopimeloyl-D-alanyl-D-alanine + UDP-N-acetyl-alpha-D-glucosamine = di-trans,octa-cis-undecaprenyl diphospho-[N-acetyl-alpha-D-glucosaminyl-(1-&gt;4)]-N-acetyl-alpha-D-muramoyl-L-alanyl-D-glutamyl-meso-2,6-diaminopimeloyl-D-alanyl-D-alanine + UDP + H(+). It functions in the pathway cell wall biogenesis; peptidoglycan biosynthesis. In terms of biological role, cell wall formation. Catalyzes the transfer of a GlcNAc subunit on undecaprenyl-pyrophosphoryl-MurNAc-pentapeptide (lipid intermediate I) to form undecaprenyl-pyrophosphoryl-MurNAc-(pentapeptide)GlcNAc (lipid intermediate II). This chain is UDP-N-acetylglucosamine--N-acetylmuramyl-(pentapeptide) pyrophosphoryl-undecaprenol N-acetylglucosamine transferase, found in Bacteroides fragilis (strain ATCC 25285 / DSM 2151 / CCUG 4856 / JCM 11019 / LMG 10263 / NCTC 9343 / Onslow / VPI 2553 / EN-2).